The primary structure comprises 262 residues: (2Z,6E)-farnesyl diphosphate synthase (262 aa).

Asp40 is a catalytic residue. Residue Asp40 participates in Mg(2+) binding. Residues 41 to 44 (GNRR), Trp45, and 86 to 88 (STE) contribute to the substrate site. Asn89 functions as the Proton acceptor in the catalytic mechanism. Substrate contacts are provided by residues Arg92, Arg211, and 217–219 (RLS). Glu230 contributes to the Mg(2+) binding site.

The protein belongs to the UPP synthase family. Z-FPP synthase subfamily. In terms of assembly, homodimer. The cofactor is Mg(2+).

The protein resides in the cytoplasm. Its subcellular location is the cell membrane. It catalyses the reaction isopentenyl diphosphate + (2E)-geranyl diphosphate = (2Z,6E)-farnesyl diphosphate + diphosphate. In terms of biological role, catalyzes the condensation of only one isopentenyl pyrophosphate (IPP) unit in the cis configuration to E-geranyl diphosphate (E-GPP) generating the 15 carbon product (2Z,6E)-farnesyl diphosphate (Z-FPP or EZ-FPP). Z-FPP is the precursor of decaprenyl diphosphate, which has a central role in the biosynthesis of the mycobacterial cell wall. In Mycobacterium tuberculosis (strain CDC 1551 / Oshkosh), this protein is (2Z,6E)-farnesyl diphosphate synthase.